The primary structure comprises 781 residues: Putative amine oxidase [copper-containing] (781 aa).

Positions 1 to 34 (MSLPKTANGMDKLKLCYLLLFYLGSSSLTEVSGA) are cleaved as a signal peptide. Cys-199 and Cys-203 are joined by a disulfide. 385 to 395 (FFDSSYMIGMN) contacts substrate. Asp-387 serves as the catalytic Proton acceptor. Cys-405 and Cys-432 are oxidised to a cystine. Position 472–477 (472–477 (IANYDY)) interacts with substrate. Tyr-475 functions as the Schiff-base intermediate with substrate; via topaquinone in the catalytic mechanism. Tyr-475 is subject to 2',4',5'-topaquinone. Positions 525 and 527 each coordinate Cu cation. The Ca(2+) site is built by Asp-534, Asp-536, Glu-579, Phe-671, Asp-674, Glu-676, Asp-682, and Leu-683. Mn(2+)-binding residues include Asp-534 and Asp-536. Asp-682 lines the Mn(2+) pocket. Cu cation is bound at residue His-693.

The protein belongs to the copper/topaquinone oxidase family. In terms of assembly, homodimer. It depends on Cu cation as a cofactor. Ca(2+) is required as a cofactor. The cofactor is L-topaquinone. Mn(2+) serves as cofactor. Post-translationally, topaquinone (TPQ) is generated by copper-dependent autoxidation of a specific tyrosyl residue. Prismatic layer of shell (at protein level). Expressed primarily in the mantle with highest level in the mantle edge and lower level in the mantle pallium.

The protein localises to the secreted. The chain is Putative amine oxidase [copper-containing] from Margaritifera margaritifera (Freshwater pearl mussel).